Consider the following 833-residue polypeptide: MutS protein homolog 5 (833 aa).

A disordered region spans residues 1 to 45 (MAFRATPGRTPPGPGPRSGIPSASFPSPQPPMAGPGGIEEEDEEE). 591 to 598 (GPNSSGKS) is an ATP binding site.

This sequence belongs to the DNA mismatch repair MutS family. Heterooligomer of MSH4 and MSH5. Interacts with HJURP. Interacts with REDIC1.

Its function is as follows. Involved in DNA mismatch repair and meiotic recombination processes. Facilitates crossovers between homologs during meiosis. The protein is MutS protein homolog 5 (Msh5) of Mus musculus (Mouse).